The following is a 273-amino-acid chain: Putative pyruvate, phosphate dikinase regulatory protein (273 aa).

153–160 (GVSRTSKS) is an ADP binding site.

It belongs to the pyruvate, phosphate/water dikinase regulatory protein family. PDRP subfamily.

It catalyses the reaction N(tele)-phospho-L-histidyl/L-threonyl-[pyruvate, phosphate dikinase] + ADP = N(tele)-phospho-L-histidyl/O-phospho-L-threonyl-[pyruvate, phosphate dikinase] + AMP + H(+). It carries out the reaction N(tele)-phospho-L-histidyl/O-phospho-L-threonyl-[pyruvate, phosphate dikinase] + phosphate + H(+) = N(tele)-phospho-L-histidyl/L-threonyl-[pyruvate, phosphate dikinase] + diphosphate. Functionally, bifunctional serine/threonine kinase and phosphorylase involved in the regulation of the pyruvate, phosphate dikinase (PPDK) by catalyzing its phosphorylation/dephosphorylation. This Ehrlichia ruminantium (strain Gardel) protein is Putative pyruvate, phosphate dikinase regulatory protein.